A 160-amino-acid chain; its full sequence is MATASKESPSENRARLRRAARLSAVQALYQMEIGGLGASAVIREFREHRFGACGEAPEFVEADEDFFESLVAGVVERQADVDPAMDALLADKWRLERLDATVRAILRVGGFELLYRKDVPARVVIDEYIEVANAFFEGAEPKFINAAFDRCARGARPDEF.

It belongs to the NusB family.

Functionally, involved in transcription antitermination. Required for transcription of ribosomal RNA (rRNA) genes. Binds specifically to the boxA antiterminator sequence of the ribosomal RNA (rrn) operons. This chain is Transcription antitermination protein NusB, found in Maricaulis maris (strain MCS10) (Caulobacter maris).